The sequence spans 104 residues: uncharacterized protein (104 aa).

The segment at 51-70 is disordered; that stretch reads NPGRSLDNNKDVSDKGRSEF. The segment covering 57–70 has biased composition (basic and acidic residues); that stretch reads DNNKDVSDKGRSEF.

The protein belongs to the protein-tyrosine phosphatase family.

This is an uncharacterized protein from Xanthomonas campestris pv. campestris (strain ATCC 33913 / DSM 3586 / NCPPB 528 / LMG 568 / P 25).